The following is a 262-amino-acid chain: ABSCISIC ACID-INSENSITIVE 5-like protein 3 (262 aa).

Ser-21, Ser-43, and Ser-66 each carry phosphoserine. At Thr-104 the chain carries Phosphothreonine. Positions 190 to 253 constitute a bZIP domain; the sequence is VERRQKRMIK…SEPPPDPKWK (64 aa). The basic motif stretch occupies residues 192–211; the sequence is RRQKRMIKNRESAARSRARK. Residues 218–232 form a leucine-zipper region; sequence LEIKVSRLEEENEKL. Positions 239 to 252 are enriched in basic and acidic residues; the sequence is EKILPSEPPPDPKW. A disordered region spans residues 239–262; sequence EKILPSEPPPDPKWKLRRTNSASL.

This sequence belongs to the bZIP family. ABI5 subfamily. As to quaternary structure, DNA-binding heterodimer with ABI5/DPBF1, DPBF2 or AREB3/DPBF3. Interacts with the AFP proteins AFP2, AFP3 and AFP4. In terms of tissue distribution, predominantly expressed in seeds.

The protein localises to the nucleus. In terms of biological role, binds to the embryo specification element and the ABA-responsive element (ABRE) of the Dc3 gene promoter and to the ABRE of the Em1 gene promoter. Could participate in abscisic acid-regulated gene expression during seed development. This Arabidopsis thaliana (Mouse-ear cress) protein is ABSCISIC ACID-INSENSITIVE 5-like protein 3 (DPBF4).